The primary structure comprises 112 residues: DNA-binding protein Bv3F (112 aa).

The segment at 65 to 92 is disordered; it reads KRNSKRMSTVPKYRDPATGKTWSGRGRQ. 2 DNA-binding regions span residues 89-94 and 89-95; these read RGRQPA and RGRQPAW.

Belongs to the histone-like protein H-NS family. In terms of assembly, homodimer that oligomerizes on DNA into higher-order complexes that form bridges between disparate regions of DNA compacting it.

It localises to the cytoplasm. The protein localises to the nucleoid. A DNA-binding protein implicated in transcriptional repression and chromosome organization and compaction. Binds in the minor groove of AT-rich DNA. Binds nucleation sites in AT-rich DNA and bridges them, forming higher-order nucleoprotein complexes and condensing the chromosome. As many horizontally transferred genes are AT-rich, it plays a central role in silencing foreign genes. The sequence is that of DNA-binding protein Bv3F from Burkholderia vietnamiensis (strain G4 / LMG 22486) (Burkholderia cepacia (strain R1808)).